We begin with the raw amino-acid sequence, 251 residues long: tRNA (guanine-N(7)-)-methyltransferase (251 aa).

Residues Glu80, Glu105, Asp132, and Asp155 each contribute to the S-adenosyl-L-methionine site. Asp155 is a catalytic residue. Substrate-binding positions include Lys159, Asp191, and Thr228–Glu231.

The protein belongs to the class I-like SAM-binding methyltransferase superfamily. TrmB family.

The catalysed reaction is guanosine(46) in tRNA + S-adenosyl-L-methionine = N(7)-methylguanosine(46) in tRNA + S-adenosyl-L-homocysteine. It functions in the pathway tRNA modification; N(7)-methylguanine-tRNA biosynthesis. Its function is as follows. Catalyzes the formation of N(7)-methylguanine at position 46 (m7G46) in tRNA. In Histophilus somni (strain 2336) (Haemophilus somnus), this protein is tRNA (guanine-N(7)-)-methyltransferase.